A 248-amino-acid chain; its full sequence is Inner membrane protein pE248R (248 aa).

A lipid anchor (N-myristoyl glycine; by host) is attached at G2. At 2 to 199 the chain is on the cytoplasmic side; the sequence is GGSTSKNSFK…ADAISAVFKN (198 aa). A helical transmembrane segment spans residues 200–220; that stretch reads IMVAAVVIVLIIVGFIAVFYF. Over 221–248 the chain is Extracellular; it reads LHSRHRHEEEEEAEPLISNKVLKNAAVS.

This sequence belongs to the asfivirus E248R family. Interacts with A151R.

It is found in the host membrane. The protein localises to the virion membrane. Functionally, essential for viral fusion with host endosomal membrane and core release. This Ornithodoros (relapsing fever ticks) protein is Inner membrane protein pE248R.